Here is a 314-residue protein sequence, read N- to C-terminus: tRNA dimethylallyltransferase (314 aa).

13–20 is a binding site for ATP; the sequence is GPTAVGKT. 15–20 serves as a coordination point for substrate; the sequence is TAVGKT. The tract at residues 38-41 is interaction with substrate tRNA; it reads DSMQ.

Belongs to the IPP transferase family. As to quaternary structure, monomer. Mg(2+) serves as cofactor.

The enzyme catalyses adenosine(37) in tRNA + dimethylallyl diphosphate = N(6)-dimethylallyladenosine(37) in tRNA + diphosphate. Catalyzes the transfer of a dimethylallyl group onto the adenine at position 37 in tRNAs that read codons beginning with uridine, leading to the formation of N6-(dimethylallyl)adenosine (i(6)A). The polypeptide is tRNA dimethylallyltransferase (Bacillus velezensis (strain DSM 23117 / BGSC 10A6 / LMG 26770 / FZB42) (Bacillus amyloliquefaciens subsp. plantarum)).